A 247-amino-acid polypeptide reads, in one-letter code: Phosphoribosylaminoimidazole-succinocarboxamide synthase (247 aa).

This sequence belongs to the SAICAR synthetase family.

It catalyses the reaction 5-amino-1-(5-phospho-D-ribosyl)imidazole-4-carboxylate + L-aspartate + ATP = (2S)-2-[5-amino-1-(5-phospho-beta-D-ribosyl)imidazole-4-carboxamido]succinate + ADP + phosphate + 2 H(+). Its pathway is purine metabolism; IMP biosynthesis via de novo pathway; 5-amino-1-(5-phospho-D-ribosyl)imidazole-4-carboxamide from 5-amino-1-(5-phospho-D-ribosyl)imidazole-4-carboxylate: step 1/2. The sequence is that of Phosphoribosylaminoimidazole-succinocarboxamide synthase from Synechococcus sp. (strain JA-2-3B'a(2-13)) (Cyanobacteria bacterium Yellowstone B-Prime).